A 321-amino-acid chain; its full sequence is tRNA(Ile)-lysidine synthase (321 aa).

30 to 35 (SGGSDS) is an ATP binding site.

Belongs to the tRNA(Ile)-lysidine synthase family.

The protein localises to the cytoplasm. It carries out the reaction cytidine(34) in tRNA(Ile2) + L-lysine + ATP = lysidine(34) in tRNA(Ile2) + AMP + diphosphate + H(+). Its function is as follows. Ligates lysine onto the cytidine present at position 34 of the AUA codon-specific tRNA(Ile) that contains the anticodon CAU, in an ATP-dependent manner. Cytidine is converted to lysidine, thus changing the amino acid specificity of the tRNA from methionine to isoleucine. The chain is tRNA(Ile)-lysidine synthase from Chlamydia muridarum (strain MoPn / Nigg).